The following is a 590-amino-acid chain: Negative elongation factor D (590 aa).

Residues 15-43 form a disordered region; sequence FGSAAEWGDEADGGQQEDDYGEGEDDAEV. Acidic residues predominate over residues 21–43; that stretch reads WGDEADGGQQEDDYGEGEDDAEV.

It belongs to the NELF-D family. As to quaternary structure, the NELF complex is composed of NELFA, NELFB, NELFCD and NELFE; NELFA and NELFCD form a stable subcomplex that binds primarily through NELFCD to the N-terminus of NELFB. Binds RNA which may help to stabilize the NELF complex on nucleic acid. In vitro, the NELFA:NELFCD subcomplex binds to ssDNA and ssRNA in a sequence- and structure-dependent manner. Interacts with ARAF1. Interacts with PCF11. Interacts with NELFB. Interacts with KAT8.

The protein resides in the nucleus. In terms of biological role, essential component of the NELF complex, a complex that negatively regulates the elongation of transcription by RNA polymerase II. The NELF complex, which acts via an association with the DSIF complex and causes transcriptional pausing, is counteracted by the P-TEFb kinase complex. The protein is Negative elongation factor D (NELFCD) of Sus scrofa (Pig).